Here is a 438-residue protein sequence, read N- to C-terminus: Transposon Ty2-OR2 Gag polyprotein (438 aa).

Disordered stretches follow at residues 1–88, 365–397, and 419–438; these read MESQ…YQQH, NVSR…AKAH, and SSQY…TERI. Composition is skewed to polar residues over residues 19–39 and 49–60; these read ASVT…SASN and KVNSQEETTPGT. The segment at 295–397 is RNA-binding; it reads ENNINVSDRL…SSKPRAAKAH (103 aa). Low complexity predominate over residues 369 to 381; the sequence is TSPNTTNTKVTTR.

In terms of assembly, homotrimer.

The protein localises to the cytoplasm. Its function is as follows. Capsid protein (CA) is the structural component of the virus-like particle (VLP), forming the shell that encapsulates the retrotransposons dimeric RNA genome. The particles are assembled from trimer-clustered units and there are holes in the capsid shells that allow for the diffusion of macromolecules. CA also has nucleocapsid-like chaperone activity, promoting primer tRNA(i)-Met annealing to the multipartite primer-binding site (PBS), dimerization of Ty2 RNA and initiation of reverse transcription. This is Transposon Ty2-OR2 Gag polyprotein (TY2A-OR2) from Saccharomyces cerevisiae (strain ATCC 204508 / S288c) (Baker's yeast).